A 329-amino-acid polypeptide reads, in one-letter code: Probable cell division protein WhiA (329 aa).

The segment at residues 275 to 308 (SLEELGALADPPLTKDAVAGRIRRLLAMADKRAQ) is a DNA-binding region (H-T-H motif).

It belongs to the WhiA family.

Functionally, involved in cell division and chromosome segregation. This Streptomyces avermitilis (strain ATCC 31267 / DSM 46492 / JCM 5070 / NBRC 14893 / NCIMB 12804 / NRRL 8165 / MA-4680) protein is Probable cell division protein WhiA.